The chain runs to 358 residues: Methionine import ATP-binding protein MetN (358 aa).

Residues 14-255 (VVFDAVSKRF…SRHETTRALL (242 aa)) enclose the ABC transporter domain. 52–59 (GRSGAGKS) is a binding site for ATP.

This sequence belongs to the ABC transporter superfamily. Methionine importer (TC 3.A.1.24) family. The complex is composed of two ATP-binding proteins (MetN), two transmembrane proteins (MetI) and a solute-binding protein (MetQ).

The protein resides in the cell inner membrane. The catalysed reaction is L-methionine(out) + ATP + H2O = L-methionine(in) + ADP + phosphate + H(+). The enzyme catalyses D-methionine(out) + ATP + H2O = D-methionine(in) + ADP + phosphate + H(+). Part of the ABC transporter complex MetNIQ involved in methionine import. Responsible for energy coupling to the transport system. The chain is Methionine import ATP-binding protein MetN from Rhizobium meliloti (strain 1021) (Ensifer meliloti).